We begin with the raw amino-acid sequence, 133 residues long: Mediator of RNA polymerase II transcription subunit 10 (133 aa).

Positions 1–13 (MSTEASTGETPEF) are enriched in polar residues. The disordered stretch occupies residues 1-28 (MSTEASTGETPEFQSYDHRGSPTQEAMK). Basic and acidic residues predominate over residues 15-28 (SYDHRGSPTQEAMK).

The protein belongs to the Mediator complex subunit 10 family. In terms of assembly, component of the Mediator complex.

It localises to the nucleus. Functionally, component of the Mediator complex, a coactivator involved in the regulated transcription of nearly all RNA polymerase II-dependent genes. Mediator functions as a bridge to convey information from gene-specific regulatory proteins to the basal RNA polymerase II transcription machinery. Mediator is recruited to promoters by direct interactions with regulatory proteins and serves as a scaffold for the assembly of a functional preinitiation complex with RNA polymerase II and the general transcription factors. The protein is Mediator of RNA polymerase II transcription subunit 10 (NUT2) of Phaeosphaeria nodorum (strain SN15 / ATCC MYA-4574 / FGSC 10173) (Glume blotch fungus).